Here is a 468-residue protein sequence, read N- to C-terminus: PTS system mannitol-specific EIICB component (468 aa).

Residues 1-25 (MNNQPSFRARVQKFGSFLSGMIMPN) are Cytoplasmic-facing. Positions 14–344 (FGSFLSGMIM…ILKTSKATAE (331 aa)) constitute a PTS EIIC type-2 domain. A helical transmembrane segment spans residues 26 to 47 (IGAFIAWGLITALFIPTGWWPN). Residues 48–51 (EQLA) lie on the Extracellular side of the membrane. Residues 52-72 (ELVGPMITYLLPLLIGYTGGK) form a helical membrane-spanning segment. At 73–135 (MIYDVRGGVV…SGFEMLVNNF (63 aa)) the chain is on the cytoplasmic side. The chain crosses the membrane as a helical span at residues 136–157 (SAGILAAILAIVAFLGIGPVVV). At 158–166 (SFSNVLASG) the chain is on the extracellular side. A helical membrane pass occupies residues 167-187 (VEVIIGAGLLPLASIFIEPAK). At 188–274 (VLFLNNAINH…ILMKPTLILA (87 aa)) the chain is on the cytoplasmic side. The helical transmembrane segment at 275–294 (VIAGGMSGVFTFVLFNAGLV) threads the bilayer. The Extracellular segment spans residues 295–314 (AVPSPGSIFALLAMTPRGEY). Residues 315–336 (AGVLAGVIIATVVSFVIASIIL) form a helical membrane-spanning segment. The Cytoplasmic portion of the chain corresponds to 337-468 (KTSKATAEDL…YDELVNRLKS (132 aa)). Residues 380–468 (NKIIFACDAG…YDELVNRLKS (89 aa)) form the PTS EIIB type-2 domain. Cysteine 386 serves as the catalytic Phosphocysteine intermediate; for EIIB activity. At cysteine 386 the chain carries Phosphocysteine; by EIIA.

In terms of assembly, homodimer.

Its subcellular location is the cell membrane. It carries out the reaction D-mannitol(out) + N(pros)-phospho-L-histidyl-[protein] = D-mannitol 1-phosphate(in) + L-histidyl-[protein]. Functionally, the phosphoenolpyruvate-dependent sugar phosphotransferase system (sugar PTS), a major carbohydrate active transport system, catalyzes the phosphorylation of incoming sugar substrates concomitantly with their translocation across the cell membrane. The enzyme II CmtAB PTS system is involved in D-mannitol transport. This is PTS system mannitol-specific EIICB component (mtlA) from Halalkalibacterium halodurans (strain ATCC BAA-125 / DSM 18197 / FERM 7344 / JCM 9153 / C-125) (Bacillus halodurans).